Reading from the N-terminus, the 440-residue chain is Proline--tRNA ligase (440 aa).

The protein belongs to the class-II aminoacyl-tRNA synthetase family. ProS type 2 subfamily. In terms of assembly, homodimer.

It localises to the cytoplasm. The enzyme catalyses tRNA(Pro) + L-proline + ATP = L-prolyl-tRNA(Pro) + AMP + diphosphate. Catalyzes the attachment of proline to tRNA(Pro) in a two-step reaction: proline is first activated by ATP to form Pro-AMP and then transferred to the acceptor end of tRNA(Pro). This chain is Proline--tRNA ligase, found in Methylocella silvestris (strain DSM 15510 / CIP 108128 / LMG 27833 / NCIMB 13906 / BL2).